The primary structure comprises 386 residues: Mannitol-1-phosphate 5-dehydrogenase (386 aa).

An NAD(+)-binding site is contributed by 6–17; the sequence is AIHFGGGNIGRG. K214 is an active-site residue.

This sequence belongs to the mannitol dehydrogenase family. As to quaternary structure, monomer.

It catalyses the reaction D-mannitol 1-phosphate + NAD(+) = beta-D-fructose 6-phosphate + NADH + H(+). In terms of biological role, catalyzes the NAD(H)-dependent interconversion of D-fructose 6-phosphate and D-mannitol 1-phosphate in the mannitol metabolic pathway. Plays a key role in liamocins biosynthesis by providing the mannitol moity that is linked to 3,5-dihydroxydecanoic acid (provided by the HR-PKS PKS1) via ester bond formation catalyzed by the esterase EST1. In Aureobasidium melanogenum (Aureobasidium pullulans var. melanogenum), this protein is Mannitol-1-phosphate 5-dehydrogenase.